The chain runs to 410 residues: Tryptophan synthase beta chain (410 aa).

Lys100 is modified (N6-(pyridoxal phosphate)lysine).

This sequence belongs to the TrpB family. In terms of assembly, tetramer of two alpha and two beta chains. Pyridoxal 5'-phosphate serves as cofactor.

The enzyme catalyses (1S,2R)-1-C-(indol-3-yl)glycerol 3-phosphate + L-serine = D-glyceraldehyde 3-phosphate + L-tryptophan + H2O. It participates in amino-acid biosynthesis; L-tryptophan biosynthesis; L-tryptophan from chorismate: step 5/5. Its function is as follows. The beta subunit is responsible for the synthesis of L-tryptophan from indole and L-serine. The polypeptide is Tryptophan synthase beta chain (Pyrobaculum aerophilum (strain ATCC 51768 / DSM 7523 / JCM 9630 / CIP 104966 / NBRC 100827 / IM2)).